The sequence spans 196 residues: MQYIKMVICGDGAVGKTSLLIAFASGEFPRDYQPTVFDNFSTLYMFQNKAYNLGLFDTAGQEDFDRLRPLGYNDTDLFLICYSVINPPSYANVYDKWYSEIKLYTGSEIPLILVGTQNDLRHDKATRETLALKQQAPISYEEGMMMRKRIGAKAFTECSVVSGKNVKQVFEEAIKVYQDRQIEISKSKEKNNCIIL.

10 to 17 (GDGAVGKT) provides a ligand contact to GTP. The Effector region motif lies at 32–40 (YQPTVFDNF). GTP-binding positions include 57-61 (DTAGQ) and 116-119 (TQND). A Cysteine methyl ester modification is found at cysteine 193. Residue cysteine 193 is the site of S-geranylgeranyl cysteine attachment. Residues 194–196 (IIL) constitute a propeptide, removed in mature form.

Belongs to the small GTPase superfamily. Rho family.

It localises to the cell membrane. The protein is Rho-related protein racL (racL) of Dictyostelium discoideum (Social amoeba).